Reading from the N-terminus, the 115-residue chain is U3-lycotoxin-Ls1d (115 aa).

The first 20 residues, 1–20, serve as a signal peptide directing secretion; the sequence is MKFVLLFGVLLVTLFSYSSA. A propeptide spanning residues 21–44 is cleaved from the precursor; the sequence is EMLDDFDQADEDELLSLIEKEEAR. Disulfide bonds link Cys48-Cys63, Cys55-Cys72, Cys62-Cys87, and Cys74-Cys85.

Belongs to the neurotoxin 19 (CSTX) family. 01 subfamily. As to expression, expressed by the venom gland.

Its subcellular location is the secreted. In Lycosa singoriensis (Wolf spider), this protein is U3-lycotoxin-Ls1d.